The chain runs to 385 residues: DNA replication and repair protein RecF (385 aa).

Position 30–37 (30–37 (GPNGFGKT)) interacts with ATP.

It belongs to the RecF family.

It is found in the cytoplasm. Its function is as follows. The RecF protein is involved in DNA metabolism; it is required for DNA replication and normal SOS inducibility. RecF binds preferentially to single-stranded, linear DNA. It also seems to bind ATP. The chain is DNA replication and repair protein RecF from Mycobacterium marinum (strain ATCC BAA-535 / M).